The chain runs to 716 residues: Translation initiation factor IF-2 (716 aa).

The tract at residues 50–136 (YKKGGARAKS…VKPKKELPEK (87 aa)) is disordered. Positions 62 to 84 (PAETNKNKQPQGVNQQSAGNQPN) are enriched in polar residues. Residues 101 to 113 (KNKKNNNNKKNKR) show a composition bias toward basic residues. Residues 114-126 (NNNNNKNQHQQKP) show a composition bias toward low complexity. The tr-type G domain occupies 217–386 (IRPPVVTIMG…LLVSEVEELK (170 aa)). The segment at 226–233 (GHVDHGKT) is G1. 226-233 (GHVDHGKT) contributes to the GTP binding site. Residues 251-255 (GITQH) form a G2 region. The interval 272 to 275 (DTPG) is G3. GTP contacts are provided by residues 272-276 (DTPGH) and 326-329 (NKID). The interval 326–329 (NKID) is G4. Positions 362–364 (SAL) are G5.

The protein belongs to the TRAFAC class translation factor GTPase superfamily. Classic translation factor GTPase family. IF-2 subfamily.

It is found in the cytoplasm. One of the essential components for the initiation of protein synthesis. Protects formylmethionyl-tRNA from spontaneous hydrolysis and promotes its binding to the 30S ribosomal subunits. Also involved in the hydrolysis of GTP during the formation of the 70S ribosomal complex. This is Translation initiation factor IF-2 (infB) from Bacillus subtilis (strain 168).